Reading from the N-terminus, the 570-residue chain is Urease subunit alpha (570 aa).

Ni(2+) is bound by residues histidine 137, histidine 139, and lysine 220. Lysine 220 is subject to N6-carboxylysine. Histidine 222 provides a ligand contact to substrate. Positions 249 and 275 each coordinate Ni(2+). The active-site Proton donor is the histidine 323. Aspartate 363 is a binding site for Ni(2+).

Belongs to the metallo-dependent hydrolases superfamily. Urease alpha subunit family. Heterotrimer of UreA (gamma), UreB (beta) and UreC (alpha) subunits. Three heterotrimers associate to form the active enzyme. Ni cation is required as a cofactor. In terms of processing, carboxylation allows a single lysine to coordinate two nickel ions.

Its subcellular location is the cytoplasm. It catalyses the reaction urea + 2 H2O + H(+) = hydrogencarbonate + 2 NH4(+). Its pathway is nitrogen metabolism; urea degradation; CO(2) and NH(3) from urea (urease route): step 1/1. This is Urease subunit alpha from Lachnoclostridium phytofermentans (strain ATCC 700394 / DSM 18823 / ISDg) (Clostridium phytofermentans).